A 1036-amino-acid polypeptide reads, in one-letter code: ADAMTS-like protein 4 (1036 aa).

The signal sequence occupies residues 1–24 (MESWLGRLWLCMMLLLPLPQPCQD). The TSP type-1 1 domain maps to 47 to 91 (GPWGRWASCSQPCGVGVQRRSRTCELHPALPLPPRPPRHPEAHRP). Disordered regions lie at residues 73–149 (HPAL…IKPG) and 163–308 (HRSR…WLPL). The segment covering 163–173 (HRSRRHPHRPG) has biased composition (basic residues). Residues 215-253 (TPRSGTAQTEVLPRTSSAPSYTGTPAPTSSFGDSRSFQG) are compositionally biased toward polar residues. Residues N454 and N737 are each glycosylated (N-linked (GlcNAc...) asparagine). 5 TSP type-1 domains span residues 687–748 (CPPY…HLCG), 750–804 (WEIS…DMGP), 805–871 (CTTA…GPCE), 872–931 (RTWR…QGQA), and 932–988 (CEDK…QPCN). Positions 991–1028 (PDDQCKDSSPHCPLVVQARLCVYPYYTTTCCRSCAHVL) constitute a PLAC domain.

Interacts with CTSB. Interacts with FBN1. Glycosylated. Can be O-fucosylated by POFUT2 on a serine or a threonine residue found within the consensus sequence C1-X(2)-(S/T)-C2-G of the TSP type-1 repeat domains where C1 and C2 are the first and second cysteine residue of the repeat, respectively. Fucosylated repeats can then be further glycosylated by the addition of a beta-1,3-glucose residue by the glucosyltransferase, B3GALTL. Fucosylation mediates the efficient secretion of ADAMTS family members. Can also be C-glycosylated with one or two mannose molecules on tryptophan residues within the consensus sequence W-X-X-W of the TPRs, and N-glycosylated. These other glycosylations can also facilitate secretion. As to expression, widely expressed in a range of tissues. Especially prevalent in brain, spinal cord, muscle, lung and heart.

The protein resides in the secreted. Its subcellular location is the extracellular space. The protein localises to the extracellular matrix. In terms of biological role, positive regulation of apoptosis. May facilitate FBN1 microfibril biogenesis. The polypeptide is ADAMTS-like protein 4 (Mus musculus (Mouse)).